Reading from the N-terminus, the 265-residue chain is Zinc import ATP-binding protein ZnuC (265 aa).

The ABC transporter domain maps to 6–221 (IRLEQVAVTL…PAFVELFGKN (216 aa)). Residue 38 to 45 (GPNGAGKT) participates in ATP binding. The segment at 245-265 (DAPATSSHTHTHVHGDHCKHG) is disordered.

This sequence belongs to the ABC transporter superfamily. Zinc importer (TC 3.A.1.15.5) family. In terms of assembly, the complex is composed of two ATP-binding proteins (ZnuC), two transmembrane proteins (ZnuB) and a solute-binding protein (ZnuA).

It localises to the cell inner membrane. It carries out the reaction Zn(2+)(out) + ATP(in) + H2O(in) = Zn(2+)(in) + ADP(in) + phosphate(in) + H(+)(in). Its function is as follows. Part of the ABC transporter complex ZnuABC involved in zinc import. Responsible for energy coupling to the transport system. The protein is Zinc import ATP-binding protein ZnuC of Pseudomonas savastanoi pv. phaseolicola (strain 1448A / Race 6) (Pseudomonas syringae pv. phaseolicola (strain 1448A / Race 6)).